Here is a 132-residue protein sequence, read N- to C-terminus: D-ribose pyranase (132 aa).

His-20 serves as the catalytic Proton donor. Substrate is bound by residues Asp-28, His-99, and 121 to 123 (YSN).

It belongs to the RbsD / FucU family. RbsD subfamily. In terms of assembly, homodecamer.

The protein localises to the cytoplasm. The enzyme catalyses beta-D-ribopyranose = beta-D-ribofuranose. It functions in the pathway carbohydrate metabolism; D-ribose degradation; D-ribose 5-phosphate from beta-D-ribopyranose: step 1/2. Functionally, catalyzes the interconversion of beta-pyran and beta-furan forms of D-ribose. This Pseudomonas putida (strain ATCC 47054 / DSM 6125 / CFBP 8728 / NCIMB 11950 / KT2440) protein is D-ribose pyranase.